Reading from the N-terminus, the 339-residue chain is Probable cytosolic iron-sulfur protein assembly protein CIAO1 (339 aa).

WD repeat units lie at residues 14–53, 59–98, 103–142, 148–187, 192–231, 250–289, and 301–339; these read HPDSRCWFLAWNPAGTLLASCGGDRRIRIWGTEGDSWICK, GHQRTVRKVAWSPCGNYLASASFDATTCIWKKNQDDFECV, GHENEVKSVAWAPSGNLLATCSRDKSVWVWEVDEEDEYEC, SHTQDVKHVVWHPSQELLASASYDDTVKLYREEEDDWVCC, GHESTVWSLAFDPSGQRLASCSDDRTVRIWRQYLPGNEQG, FHSRTIYDIAWCQLTGALATACGDDAIRVFQEDPNSDPQQ, and AHSQDVNCVAWNPKEPGLLASCSDDGEVAFWKYQRPEGL. The LYR motif; required for interaction with HSC20 motif lies at 176–178; sequence LYR.

This sequence belongs to the WD repeat CIA1 family. Component of the CIA complex. Interacts with CIAO2A and forms a complex with CIAO2B and MMS19; the interactions with CIAO2A and CIAO2B are mutually exclusive. Interacts with CHD1L, ERCC2, IREB2 and POLD1. Component of the MMXD complex, which includes CIAO1, ERCC2, CIAO2B, MMS19 and SLC25A5. Interacts with WT1. Interacts with CIAO3. Interacts (via LYR motif) with HSC20.

The protein localises to the cytoplasm. Its function is as follows. Key component of the cytosolic iron-sulfur protein assembly (CIA) complex, a multiprotein complex that mediates the incorporation of iron-sulfur cluster into extramitochondrial Fe/S proteins. As a CIA complex component, interacts specifically with CIAO2A or CIAO2B and MMS19 to assist different branches of iron-sulfur protein assembly, depending of its interactors. The complex CIAO1:CIAO2B:MMS19 binds to and facilitates the assembly of most cytosolic-nuclear Fe/S proteins. CIAO1:CIAO2A specifically matures ACO1 and stabilizes IREB2. Seems to specifically modulate the transactivation activity of WT1. As part of the mitotic spindle-associated MMXD complex it may play a role in chromosome segregation. The sequence is that of Probable cytosolic iron-sulfur protein assembly protein CIAO1 from Homo sapiens (Human).